The chain runs to 354 residues: Guanine nucleotide-binding protein G(o) subunit alpha (354 aa).

Residue Gly2 is the site of N-myristoyl glycine attachment. Cys3 carries S-palmitoyl cysteine lipidation. The region spanning 32-354 (KDVKLLLLGA…ANNLRGCGLY (323 aa)) is the G-alpha domain. Residues 35-48 (KLLLLGAGESGKST) form a G1 motif region. The GTP site is built by Glu43, Lys46, Ser47, Thr48, Ser152, Leu176, Arg177, Thr178, and Arg179. Ser47 lines the Mg(2+) pocket. A G2 motif region spans residues 174-182 (DILRTRVKT). Thr182 contributes to the Mg(2+) binding site. Positions 197–206 (FRLFDVGGQR) are G3 motif. A 5-glutamyl histamine modification is found at Gln205. Residues 266-273 (ILFLNKKD) are G4 motif. GTP-binding residues include Asn270, Asp273, and Cys325. The segment at 324-329 (TCATDT) is G5 motif. Cys351 is lipidated: S-palmitoyl cysteine.

Belongs to the G-alpha family. G(i/o/t/z) subfamily. G proteins are composed of 3 units; alpha, beta and gamma. The alpha chain contains the guanine nucleotide binding site. Forms a complex with GNB1 and GNG3. Interacts with RGS14. Interacts with RGS16. Interacts with RGS19. Interacts (when palmitoylated) with ADGRG3. Post-translationally, histaminylated at Gln-205 residues by TGM2.

The protein resides in the cell membrane. The protein localises to the membrane. The enzyme catalyses GTP + H2O = GDP + phosphate + H(+). With respect to regulation, the GTPase activity is promoted by GTPAse activators, such as RGS14, RGS16 and RGS19. Functionally, guanine nucleotide-binding proteins (G proteins) function as transducers downstream of G protein-coupled receptors (GPCRs) in numerous signaling cascades. The alpha chain contains the guanine nucleotide binding site and alternates between an active, GTP-bound state and an inactive, GDP-bound state. Signaling by an activated GPCR promotes GDP release and GTP binding. The alpha subunit has a low GTPase activity that converts bound GTP to GDP, thereby terminating the signal. Both GDP release and GTP hydrolysis are modulated by numerous regulatory proteins. Signaling is mediated via effector proteins, such as adenylate cyclase. Inhibits adenylate cyclase activity, leading to decreased intracellular cAMP levels. This Bos taurus (Bovine) protein is Guanine nucleotide-binding protein G(o) subunit alpha (GNAO1).